The following is a 402-amino-acid chain: Flagellar hook protein FlgE (402 aa).

This sequence belongs to the flagella basal body rod proteins family.

The protein resides in the bacterial flagellum basal body. The sequence is that of Flagellar hook protein FlgE (flgE) from Escherichia coli (strain K12).